The chain runs to 110 residues: PTS system oligo-beta-mannoside-specific EIIA component (110 aa).

The 99-residue stretch at 9–107 (LTDEQISFQL…VKEMLDLFKT (99 aa)) folds into the PTS EIIA type-3 domain. H83 acts as the Tele-phosphohistidine intermediate in catalysis. H83 is subject to Phosphohistidine; by HPr.

It localises to the cytoplasm. Its function is as follows. The phosphoenolpyruvate-dependent sugar phosphotransferase system (sugar PTS), a major carbohydrate active transport system, catalyzes the phosphorylation of incoming sugar substrates concomitantly with their translocation across the cell membrane. The enzyme II GmuABC PTS system is involved in the transport of oligo-glucomannans such as cellobiose or mannobiose. This Bacillus subtilis (strain 168) protein is PTS system oligo-beta-mannoside-specific EIIA component.